A 529-amino-acid polypeptide reads, in one-letter code: Probable E3 ubiquitin-protein ligase MGRN1 (529 aa).

The RING-type zinc finger occupies 275-314 (ECVVCLSDLRDTLILPCRHLCLCNACADTLRYQANNCPIC). 2 disordered regions span residues 341-362 (SPVL…IPPG) and 396-529 (EMGD…VEEC). Composition is skewed to polar residues over residues 449–463 (AQPQ…SPSE) and 477–487 (NSGSESRSLGV). The segment covering 501–511 (SSLSQSESDPS) has biased composition (low complexity). Positions 520–529 (ESWSTAVEEC) are enriched in polar residues.

In terms of processing, autoubiquitinated in vitro.

It carries out the reaction S-ubiquitinyl-[E2 ubiquitin-conjugating enzyme]-L-cysteine + [acceptor protein]-L-lysine = [E2 ubiquitin-conjugating enzyme]-L-cysteine + N(6)-ubiquitinyl-[acceptor protein]-L-lysine.. It functions in the pathway protein modification; protein ubiquitination. Its function is as follows. E3 ubiquitin-protein ligase. Also acts as a negative regulator of hedgehog signaling. This Danio rerio (Zebrafish) protein is Probable E3 ubiquitin-protein ligase MGRN1 (mgrn1).